The primary structure comprises 204 residues: Probable GTP-binding protein EngB (204 aa).

Residues 22-197 enclose the EngB-type G domain; sequence GFPEIAFVGR…LAEFDNVLSI (176 aa). Residues 30-37, 57-61, 75-78, 144-147, and 176-178 contribute to the GTP site; these read GRSNVGKS, GKTRQ, DLPG, NKVD, and FSA. 2 residues coordinate Mg(2+): S37 and T59.

Belongs to the TRAFAC class TrmE-Era-EngA-EngB-Septin-like GTPase superfamily. EngB GTPase family. Requires Mg(2+) as cofactor.

In terms of biological role, necessary for normal cell division and for the maintenance of normal septation. In Ruminiclostridium cellulolyticum (strain ATCC 35319 / DSM 5812 / JCM 6584 / H10) (Clostridium cellulolyticum), this protein is Probable GTP-binding protein EngB.